The chain runs to 1042 residues: MDSNNSKKGSSVKSPCQTPRSTEKSNRDFRVDSNSNSNPVSKNEKEKGVNIQVIVRCRPFNSEETRLQTPAVLTCNDRKKEVAVAQNIAGKQIDKTFLFDKVFGPTSQQKDLYHQAVSPIVFEVLDGYNCTIFAYGQTGTGKTYTMEGGARKKNGEIPSDAGVIPRAVKQIFDILEAQSAAEYSLKVSFLELYNEELTDLLAPEETKFADDKSKKPLALMEDGKGGVFVRGLEEEIVSTADEIYKVLEKGSAKRRTAETLLNKQSSRSHSIFSVTIHIKECTPEGEEIVKSGKLNLVDLAGSENISRSGAREGRAREAGEINKSLLTLGRVINALVEHSGHIPYRESKLTRLLRDSLGGKTKTCVIATVSPSVHCLEETLSTLDYAHRAKHIKNKPEVNQKMMKSAIMKDLYSEIERLKQEVYAAREKNGIYIPKERYTQEEAEKKAMADKIEQMEVEGEAKDKQIIDLQELYNSEQLVTAGLREKLDKTEKKLYETEQALLDLEEKHRQAVATIKEKEYLISNLLKSEKTLVDRAVELQAELANAASDVSNLFAKIGRKDKIEDSNRSLIQDFQSQLLRQLELLNNSVAGSVSQQEKQLQDMENVMVSFVSAKTKATETLRGSLAQLKEKYNTGIKSLDDIAGNLDKDSQSTLNDLNSEVTKHSCALEDMFKGFTSEAYTLLEGLQGSLHNQEEKLSAFTQQQRDLHSRSMDSAKSVSTVMLDFFKTLDTHANKLTKLAEDAQNVNEQKLSAFTKKFEESIANEEKQMLEKVAELLASSNARKKELVQIAVQDIRQGSSSQTGALQQEMSAMQDSASSIKVQWNSHIVQAESHHLDNISAVEVAKEDMQKMHLKCLENSKTGTQQWKTAQESLVDLEKRNVATADSIIRGAIENNEKLRTQFSSAVSTTLSDVDSSNREIISSIDNSLQLDKDASTDVNSTIVPCSENLKELRTHHDDNVVEIKQNTGKCLGHEYKVDEATSSTPRKREYNIPTVGSIEELKTPSFEELLKAFHDCKSPKQMQNGEAKHVSNGRPPLTAIN.

Positions 1 to 14 are enriched in low complexity; sequence MDSNNSKKGSSVKS. The disordered stretch occupies residues 1–45; it reads MDSNNSKKGSSVKSPCQTPRSTEKSNRDFRVDSNSNSNPVSKNEK. A compositionally biased stretch (basic and acidic residues) spans 21–31; the sequence is STEKSNRDFRV. A compositionally biased stretch (polar residues) spans 32–41; sequence DSNSNSNPVS. The 343-residue stretch at 50–392 folds into the Kinesin motor domain; it reads NIQVIVRCRP…LDYAHRAKHI (343 aa). 136 to 143 lines the ATP pocket; the sequence is GQTGTGKT. Positions 480–517 form a coiled coil; that stretch reads TAGLREKLDKTEKKLYETEQALLDLEEKHRQAVATIKE. The segment at 1021–1042 is disordered; it reads KQMQNGEAKHVSNGRPPLTAIN.

It belongs to the TRAFAC class myosin-kinesin ATPase superfamily. Kinesin family. KIN-5/BimC subfamily.

The protein resides in the cytoplasm. Its subcellular location is the cytoskeleton. The protein localises to the spindle. In terms of biological role, responsible for microtubule translocation. May be important for the organization of phragmoplast-specific arrays of microtubules. Plays an essential role in stabilizing the mitotic spindle. Required during mitotic cytokinesis. In Arabidopsis thaliana (Mouse-ear cress), this protein is Kinesin-like protein KIN-5A.